Consider the following 350-residue polypeptide: Anthranilate phosphoribosyltransferase (350 aa).

5-phospho-alpha-D-ribose 1-diphosphate is bound by residues Gly-88, 91 to 92 (GD), Thr-96, 98 to 101 (NIST), 116 to 124 (KHGGRSVSS), and Ser-128. Gly-88 contacts anthranilate. Position 100 (Ser-100) interacts with Mg(2+). Arg-174 provides a ligand contact to anthranilate. Positions 233 and 234 each coordinate Mg(2+).

The protein belongs to the anthranilate phosphoribosyltransferase family. In terms of assembly, homodimer. Requires Mg(2+) as cofactor.

It carries out the reaction N-(5-phospho-beta-D-ribosyl)anthranilate + diphosphate = 5-phospho-alpha-D-ribose 1-diphosphate + anthranilate. Its pathway is amino-acid biosynthesis; L-tryptophan biosynthesis; L-tryptophan from chorismate: step 2/5. Its function is as follows. Catalyzes the transfer of the phosphoribosyl group of 5-phosphorylribose-1-pyrophosphate (PRPP) to anthranilate to yield N-(5'-phosphoribosyl)-anthranilate (PRA). The chain is Anthranilate phosphoribosyltransferase from Albidiferax ferrireducens (strain ATCC BAA-621 / DSM 15236 / T118) (Rhodoferax ferrireducens).